Reading from the N-terminus, the 92-residue chain is UPF0237 protein MM_0082 (92 aa).

Positions 7-81 (IITVIGSDRV…KSLGVEVKVQ (75 aa)) constitute an ACT domain.

This sequence belongs to the UPF0237 family.

The sequence is that of UPF0237 protein MM_0082 from Methanosarcina mazei (strain ATCC BAA-159 / DSM 3647 / Goe1 / Go1 / JCM 11833 / OCM 88) (Methanosarcina frisia).